Here is a 62-residue protein sequence, read N- to C-terminus: Large ribosomal subunit protein bL28 (62 aa).

The protein belongs to the bacterial ribosomal protein bL28 family.

In Caldanaerobacter subterraneus subsp. tengcongensis (strain DSM 15242 / JCM 11007 / NBRC 100824 / MB4) (Thermoanaerobacter tengcongensis), this protein is Large ribosomal subunit protein bL28.